The primary structure comprises 250 residues: Golgi SNAP receptor complex member 1 (250 aa).

Alanine 2 is modified (N-acetylalanine). The Cytoplasmic segment spans residues 2–229 (AAGTSNYWED…QRINLRKRRD (228 aa)). Residues 9 to 30 (WEDLRKQARQLENELDLKLVSF) adopt a coiled-coil conformation. A disordered region spans residues 37-59 (YSHSSARDGGRDRYSSDTTPLLN). The segment covering 41–51 (SARDGGRDRYS) has biased composition (basic and acidic residues). Positions 68–95 (ETMAIEIEQLLARLTGVNDKMAEYTHSA) form a coiled coil. Residue serine 141 is modified to Phosphoserine. Residues 230-250 (SLILGGVIGICTILLLLYAFH) traverse the membrane as a helical; Anchor for type IV membrane protein segment.

It belongs to the GOSR1 family. As to quaternary structure, component of several multiprotein Golgi SNARE complexes. Identified in a SNARE complex with BET1, STX5 and YKT6, in a SNARE complex with BET1L, STX5 and YKT6, in a SNARE complex with STX5, GOSR2, SEC22B and BET1, and in complex with STX5 and COG3. Interacts with GABARAPL2. Interacts with the 34 kDa STX5 isoform.

The protein localises to the golgi apparatus membrane. Involved in transport from the ER to the Golgi apparatus as well as in intra-Golgi transport. It belongs to a super-family of proteins called t-SNAREs or soluble NSF (N-ethylmaleimide-sensitive factor) attachment protein receptor. May play a protective role against hydrogen peroxide induced cytotoxicity under glutathione depleted conditions in neuronal cells by regulating the intracellular ROS levels via inhibition of p38 MAPK (MAPK11, MAPK12, MAPK13 and MAPK14). Participates in docking and fusion stage of ER to cis-Golgi transport. Plays an important physiological role in VLDL-transport vesicle-Golgi fusion and thus in VLDL delivery to the hepatic cis-Golgi. This chain is Golgi SNAP receptor complex member 1 (Gosr1), found in Rattus norvegicus (Rat).